The sequence spans 268 residues: NADPH-dependent 7-cyano-7-deazaguanine reductase (268 aa).

Substrate is bound at residue 79 to 81 (VES). 81–82 (SK) contributes to the NADPH binding site. The active-site Thioimide intermediate is Cys176. Residue Asp183 is the Proton donor of the active site. Residue 215–216 (HE) participates in substrate binding. 244 to 245 (RG) serves as a coordination point for NADPH.

This sequence belongs to the GTP cyclohydrolase I family. QueF type 2 subfamily. As to quaternary structure, homodimer.

The protein resides in the cytoplasm. It carries out the reaction 7-aminomethyl-7-carbaguanine + 2 NADP(+) = 7-cyano-7-deazaguanine + 2 NADPH + 3 H(+). It functions in the pathway tRNA modification; tRNA-queuosine biosynthesis. Catalyzes the NADPH-dependent reduction of 7-cyano-7-deazaguanine (preQ0) to 7-aminomethyl-7-deazaguanine (preQ1). This is NADPH-dependent 7-cyano-7-deazaguanine reductase from Saccharophagus degradans (strain 2-40 / ATCC 43961 / DSM 17024).